The sequence spans 583 residues: Isocitrate dehydrogenase kinase/phosphatase (583 aa).

Residues 315-321 and K336 contribute to the ATP site; that span reads APGIRGM. D371 is an active-site residue.

Belongs to the AceK family.

Its subcellular location is the cytoplasm. The catalysed reaction is L-seryl-[isocitrate dehydrogenase] + ATP = O-phospho-L-seryl-[isocitrate dehydrogenase] + ADP + H(+). In terms of biological role, bifunctional enzyme which can phosphorylate or dephosphorylate isocitrate dehydrogenase (IDH) on a specific serine residue. This is a regulatory mechanism which enables bacteria to bypass the Krebs cycle via the glyoxylate shunt in response to the source of carbon. When bacteria are grown on glucose, IDH is fully active and unphosphorylated, but when grown on acetate or ethanol, the activity of IDH declines drastically concomitant with its phosphorylation. The protein is Isocitrate dehydrogenase kinase/phosphatase of Salmonella agona (strain SL483).